We begin with the raw amino-acid sequence, 91 residues long: Phosphocarrier protein NPr (91 aa).

One can recognise an HPr domain in the interval 3–90 (KLERQVTICN…ALVDAKFDEA (88 aa)). H17 acts as the Pros-phosphohistidine intermediate in catalysis.

This sequence belongs to the HPr family.

Its subcellular location is the cytoplasm. Its function is as follows. Component of the phosphoenolpyruvate-dependent nitrogen-metabolic phosphotransferase system (nitrogen-metabolic PTS), that seems to be involved in regulating nitrogen metabolism. The phosphoryl group from phosphoenolpyruvate (PEP) is transferred to the phosphoryl carrier protein NPr by enzyme I-Ntr. Phospho-NPr then transfers it to EIIA-Ntr. Could function in the transcriptional regulation of sigma-54 dependent operons in conjunction with the NPr (PtsO) and EIIA-Ntr (PtsN) proteins. This Shewanella violacea (strain JCM 10179 / CIP 106290 / LMG 19151 / DSS12) protein is Phosphocarrier protein NPr (ptsO).